The primary structure comprises 461 residues: Transforming growth factor beta-1-induced transcript 1 protein (461 aa).

M1 carries the N-acetylmethionine modification. The disordered stretch occupies residues 1–87; the sequence is MEDLDALLSD…PFSSSSGVLG (87 aa). The tract at residues 1–200 is transcription activation; the sequence is MEDLDALLSD…GCPSPPGQTS (200 aa). Positions 1-240 are interaction with PTK2B/PYK2; that stretch reads MEDLDALLSD…CNKPIAGQVV (240 aa). The LD motif 1 signature appears at 3–15; sequence DLDALLSDLETTT. T33 carries the phosphothreonine modification. Position 38 is a phosphotyrosine (Y38). A compositionally biased stretch (low complexity) spans 44–53; the sequence is TGSGESSGTT. At Y60 the chain carries Phosphotyrosine. Phosphoserine is present on S68. The interval 83 to 136 is interaction with PTK2/FAK1; it reads SGVLGNGLCELDRLLQELNATQFNITDEIMSQFPSSKMAEGEEKEDQSEDKSSP. The short motif at 92–104 is the LD motif 2 element; that stretch reads ELDRLLQELNATQ. Residues 116–154 are disordered; that stretch reads PSSKMAEGEEKEDQSEDKSSPTVPPSPFPAPSKPSATSA. The span at 137 to 147 shows a compositional bias: pro residues; the sequence is TVPPSPFPAPS. S141, S164, and S186 each carry phosphoserine. An LD motif 3 motif is present at residues 157–168; that stretch reads ELDRLMASLSDF. The interval 171-204 is disordered; sequence QNHLPASGPPQPPAASPTREGCPSPPGQTSKGSL. At T188 the chain carries Phosphothreonine. At S194 the chain carries Phosphoserine. The short motif at 203-215 is the LD motif 4 element; sequence SLDTMLGLLQSDL. 4 consecutive LIM zinc-binding domains span residues 226–285, 286–343, 344–403, and 404–461; these read GLCG…RFSP, RCGF…QLFA, PRCQ…QRGS, and LCAT…KLFG. S403 is modified (phosphoserine). The residue at position 407 (T407) is a Phosphothreonine.

The protein belongs to the paxillin family. In terms of assembly, homooligomer. Interacts with PPARG. Interacts with TRAF4. Interacts with CRIP2. Interacts with HSPB1. Interacts with ILK. Interacts with LIMS1 and LIMS2. Interacts with NCK2. Interacts with NUDT16L1. Interacts with PAK. Interacts with PTPN12. Interacts with TCF3. Interacts with TCF7L2. Interacts with VCL. Interacts (via LD motif 3) with GIT1. Also interacts with GIT2. Forms a complex with ARHGEF7. Interacts with AR/androgen receptor in a ligand-dependent manner. Interacts with CSK. Interacts with PTK2/FAK1 and PTK2B/PYK2. Interacts with SLC6A3. Interacts with SLC6A4. Interacts with NR3C1. Interacts with SMAD3. Interacts with MAPK15. Interacts with SRC. Interacts with LYN. Interacts with talin. Interacts (via LIM zinc-binding domain 2) with CBLC (via RING-type zinc finger); the interaction is direct and enhances CBLC E3 ubiquitin-protein ligase activity. Interacts with PARVA. Interacts with PXN. In terms of processing, phosphorylated by gonadotropin-releasing hormone-activated SRC. As to expression, ubiquitously expressed. Higher expression is detected in lung and spleen. Expression decreases during pregnancy in mammary glands. Expressed in all brain areas, with higher levels in cerebellum, prefrontal cortex and hypothalamus. Expressed in smooth muscle, myoepithelial cells and platelets (at protein level). Preferentially expressed in mesenchymal versus epithelial cells (at protein level).

It localises to the cell junction. The protein resides in the focal adhesion. It is found in the nucleus matrix. The protein localises to the cytoplasm. Its subcellular location is the cytoskeleton. Its function is as follows. Functions as a molecular adapter coordinating multiple protein-protein interactions at the focal adhesion complex and in the nucleus. Links various intracellular signaling modules to plasma membrane receptors and regulates the Wnt and TGFB signaling pathways. May also regulate SLC6A3 and SLC6A4 targeting to the plasma membrane hence regulating their activity. In the nucleus, functions as a nuclear receptor coactivator regulating glucocorticoid, androgen, mineralocorticoid and progesterone receptor transcriptional activity. May play a role in the processes of cell growth, proliferation, migration, differentiation and senescence. May have a zinc-dependent DNA-binding activity. The sequence is that of Transforming growth factor beta-1-induced transcript 1 protein (Tgfb1i1) from Mus musculus (Mouse).